The sequence spans 670 residues: Transcription factor 4 (670 aa).

The essential for MYOD1 inhibition stretch occupies residues 1–83; the sequence is MHHQQRMAAL…GTPYDHMTSR (83 aa). 6 disordered regions span residues 24–244, 262–320, 335–378, 406–426, 465–573, and 637–670; these read AMFS…LGNS, LSYP…SQTG, HTNN…EGPL, PSTA…PSHN, SLLP…MANN, and KRRE…MGQM. Residues 29-49 are compositionally biased toward polar residues; sequence PVSSGKNGPTSLASGHFTGSN. Phosphoserine is present on residues serine 66, serine 87, and serine 92. Composition is skewed to polar residues over residues 107–125, 136–154, 205–215, and 265–305; these read GSYS…QQSL, GTLS…SSNN, PAASTFPSSFF, and PSHS…TDSI. Positions 336 to 347 are enriched in low complexity; sequence TNNSFSSNPSTP. The segment covering 364-373 has biased composition (polar residues); that stretch reads NGGQASSSPN. Serine 371 carries the post-translational modification Phosphoserine. The tract at residues 378 to 399 is leucine-zipper; that stretch reads LHSLQSRIEDRLERLDDAIHVL. Composition is skewed to low complexity over residues 466–479 and 502–511; these read LLPN…LPVQ and GQSVSSGSSE. Serine 514 bears the Phosphoserine mark. 2 stretches are compositionally biased toward basic and acidic residues: residues 526–542 and 558–573; these read KSSE…DIKS and PEQK…MANN. One can recognise a bHLH domain in the interval 567–620; sequence ERRMANNARERLRVRDINEAFKELGRMVQLHLKSDKPQTKLLILHQAVAVILSL. The tract at residues 622–645 is class A specific domain; it reads QQVRERNLNPKAACLKRREEEKVS.

As to quaternary structure, efficient DNA binding requires dimerization with another bHLH protein. Isoform 2 seems to form inactive heterodimers with MYOD1. Interacts with HIVEP2. Interacts with NEUROD2. Interacts with AGBL1. Interacts with BHLHA9. In terms of tissue distribution, expressed in the cerebral cortex, Purkinje and granule cell layers of the cerebellum, olfactory neuroepithelium, pyramidal cells of hippocampal layers CA1-CA4, and in the granular cells of the dentate gyrus.

Its subcellular location is the nucleus. Functionally, transcription factor that binds to the immunoglobulin enhancer Mu-E5/KE5-motif. Involved in the initiation of neuronal differentiation. Activates transcription by binding to the E box (5'-CANNTG-3'). Isoform 2 inhibits MYOD1 activation of the cardiac alpha-actin promoter. Binds to the E-box present in the somatostatin receptor 2 initiator element (SSTR2-INR) to activate transcription. May have a regulatory function in developmental processes as well as during neuronal plasticity. The sequence is that of Transcription factor 4 (Tcf4) from Mus musculus (Mouse).